The sequence spans 419 residues: Carboxypeptidase A1 (419 aa).

A signal peptide spans 1–16 (MKRLLILSLLLEAVCG). A propeptide spans 17–110 (NENFVGHQVL…KQQMSAFQAR (94 aa)) (activation peptide). The Peptidase M14 domain occupies 121 to 414 (TYHTLDEIYE…LALLTIMDHT (294 aa)). Zn(2+) contacts are provided by H179 and E182. Residues 179 to 182 (HSRE), R237, and 254 to 255 (NR) contribute to the substrate site. A disulfide bond links C248 and C271. Residue H306 participates in Zn(2+) binding. Substrate is bound by residues 307–308 (SY) and Y358. E380 functions as the Proton donor/acceptor in the catalytic mechanism.

The protein belongs to the peptidase M14 family. As to quaternary structure, monomer. May form a complex with proelastase 2. Zn(2+) serves as cofactor.

Its subcellular location is the secreted. It carries out the reaction Release of a C-terminal amino acid, but little or no action with -Asp, -Glu, -Arg, -Lys or -Pro.. The catalysed reaction is leukotriene C4 + H2O = leukotriene F4 + glycine. Functionally, carboxypeptidase that catalyzes the release of a C-terminal amino acid, but has little or no action with -Asp, -Glu, -Arg, -Lys or -Pro. Catalyzes the conversion of leukotriene C4 to leukotriene F4 via the hydrolysis of an amide bond. In Rattus norvegicus (Rat), this protein is Carboxypeptidase A1.